The primary structure comprises 296 residues: MSSTQFNKGPSYGLSAEVKNRLLSKYDPQKEAELRSWIEGLTGLSIGPDFQKGLKDGIILCTLMNKLQPGSVPKINRSMQNWHQLENLSNFIKAMVSYGMNPVDLFEANDLFESGNMTQVQVSLLALAGKAKTKGLQSDVDIGVKYSEKQQRNFDDATMKAGQCVIGLQMGTNKCASQSGMTAYGTRRHLYDPKNHILPPMDHSTISLQMGTNKCASQVGMTAPGTRRHIYDTKLGTDKCDNSSMSLQMGYTQGANQSGQVFGLGRQIYDPKYCPQGPAADGAPAAAGDCPGPGES.

At serine 2 the chain carries N-acetylserine. An N6-acetyllysine mark is found at lysine 8 and lysine 25. Residues 28–132 (PQKEAELRSW…SLLALAGKAK (105 aa)) form the Calponin-homology (CH) domain. Serine 138 carries the post-translational modification Phosphoserine. Calponin-like repeat units lie at residues 166-191 (IGLQMGTNKCASQSGMTAYGTRRHLY), 206-231 (ISLQMGTNKCASQVGMTAPGTRRHIY), and 245-269 (MSLQMGYTQGANQSGQVFGLGRQIY). The segment at 275–296 (PQGPAADGAPAAAGDCPGPGES) is disordered.

Belongs to the calponin family. In terms of tissue distribution, smooth muscle, and tissues containing significant amounts of smooth muscle.

Thin filament-associated protein that is implicated in the regulation and modulation of smooth muscle contraction. It is capable of binding to actin, calmodulin and tropomyosin. The interaction of calponin with actin inhibits the actomyosin Mg-ATPase activity. The protein is Calponin-2 (CNN2) of Sus scrofa (Pig).